The sequence spans 243 residues: Probable transcriptional regulatory protein LCA_1307 (243 aa).

Positions 1–21 are disordered; the sequence is MSGHSKWHNIQGRKNAQDAKR.

Belongs to the TACO1 family.

It localises to the cytoplasm. The polypeptide is Probable transcriptional regulatory protein LCA_1307 (Latilactobacillus sakei subsp. sakei (strain 23K) (Lactobacillus sakei subsp. sakei)).